Consider the following 586-residue polypeptide: MSTPAKPTSVESYKRLLSYAFKYKAYFIISFIGFGVFAAMEAQLINILEYFVDRLEGRPSAPVLGLSADVTSSLWFVPISVVVLSIIRGIGAYFGNFYMSLVGLNVITNLRRQIFSQMIYLPQSFYDTKNSGELISLLVYNIEQVTGSVTNAVKTLFRDGMSVAWFLAMMLIINWKLTLAFICVAPVLGGLMYIASKYFRKVSHKIQSAVGRVSHVATESIQGIKLVKSYGGEKYELDRFNDATNQNLHYGTKFERVSAFQTPVLHIVLALALAVTFYLIMILWDSDSSKAVVYATYAAAIAKPFRQLTKINSIIQKGLAAADTIFEVLDLQAEPNSGQQKLNAPKGRVELKDVHFGYNQDTPALNGISFAIEPGQTVALVGSSGSGKSTIVSLLLRFYDNQQGSITIDGTPIQSLELHNLREHIALVNQQTILFNDTIAANIAYGSEHIDEARIQDAAKQANAHDFIMALPNGYQTPAGEDGSRLSGGQRQRIAIARALYKNAPILILDEATSALDNESEKQIQSALDELKQGRTTLVIAHRLSTIENADTILVMDNGRIVEAGNHQTLLDRSGVYANLYHSQFS.

The next 4 membrane-spanning stretches (helical) occupy residues 25–45 (AYFI…AQLI), 74–94 (LWFV…GAYF), 163–183 (VAWF…AFIC), and 264–284 (VLHI…MILW). The region spanning 28–317 (IISFIGFGVF…LTKINSIIQK (290 aa)) is the ABC transmembrane type-1 domain. The region spanning 349–583 (VELKDVHFGY…SGVYANLYHS (235 aa)) is the ABC transporter domain. 382 to 389 (GSSGSGKS) is an ATP binding site.

The protein belongs to the ABC transporter superfamily. Lipid exporter (TC 3.A.1.106) family. Homodimer.

The protein localises to the cell inner membrane. It catalyses the reaction ATP + H2O + lipid A-core oligosaccharideSide 1 = ADP + phosphate + lipid A-core oligosaccharideSide 2.. Its function is as follows. Involved in lipopolysaccharide (LPS) biosynthesis. Translocates lipid A-core from the inner to the outer leaflet of the inner membrane. Transmembrane domains (TMD) form a pore in the inner membrane and the ATP-binding domain (NBD) is responsible for energy generation. The chain is ATP-dependent lipid A-core flippase from Saccharophagus degradans (strain 2-40 / ATCC 43961 / DSM 17024).